The following is a 171-amino-acid chain: Disulfide bond formation protein B (171 aa).

Topologically, residues 1–10 are cytoplasmic; the sequence is MQRLLTYRAL. The chain crosses the membrane as a helical span at residues 11-27; that stretch reads NFILFIASVVAMLFAII. The Periplasmic portion of the chain corresponds to 28–46; the sequence is FLQNYKGLEPCPLCIFQRI. C38 and C41 are disulfide-bonded. The chain crosses the membrane as a helical span at residues 47–63; it reads GLMVMGGFSLIAAVGHP. The Cytoplasmic segment spans residues 64–70; it reads KKMGMQL. Residues 71–88 traverse the membrane as a helical segment; it reads LLWIGSMAGILWSAGVAA. The Periplasmic portion of the chain corresponds to 89 to 145; it reads RHVWIQHLPADQVPACGPGLDYFLEALPMKQVINQVLSGSGECAEISWRFLGLSIPE. A disulfide bridge connects residues C104 and C131. The helical transmembrane segment at 146–164 threads the bilayer; the sequence is QALILFTALILVNLLVLWR. Over 165 to 171 the chain is Cytoplasmic; the sequence is IISKRTA.

It belongs to the DsbB family.

The protein localises to the cell inner membrane. Its function is as follows. Required for disulfide bond formation in some periplasmic proteins. Acts by oxidizing the DsbA protein. The sequence is that of Disulfide bond formation protein B from Psychrobacter sp. (strain PRwf-1).